The primary structure comprises 236 residues: Large ribosomal subunit protein uL1 (236 aa).

Belongs to the universal ribosomal protein uL1 family. Part of the 50S ribosomal subunit.

In terms of biological role, binds directly to 23S rRNA. The L1 stalk is quite mobile in the ribosome, and is involved in E site tRNA release. Protein L1 is also a translational repressor protein, it controls the translation of the L11 operon by binding to its mRNA. The chain is Large ribosomal subunit protein uL1 from Sorangium cellulosum (strain So ce56) (Polyangium cellulosum (strain So ce56)).